The following is a 256-amino-acid chain: Imidazole glycerol phosphate synthase subunit HisF (256 aa).

Residues aspartate 11 and aspartate 130 contribute to the active site.

The protein belongs to the HisA/HisF family. Heterodimer of HisH and HisF.

The protein resides in the cytoplasm. The enzyme catalyses 5-[(5-phospho-1-deoxy-D-ribulos-1-ylimino)methylamino]-1-(5-phospho-beta-D-ribosyl)imidazole-4-carboxamide + L-glutamine = D-erythro-1-(imidazol-4-yl)glycerol 3-phosphate + 5-amino-1-(5-phospho-beta-D-ribosyl)imidazole-4-carboxamide + L-glutamate + H(+). It participates in amino-acid biosynthesis; L-histidine biosynthesis; L-histidine from 5-phospho-alpha-D-ribose 1-diphosphate: step 5/9. In terms of biological role, IGPS catalyzes the conversion of PRFAR and glutamine to IGP, AICAR and glutamate. The HisF subunit catalyzes the cyclization activity that produces IGP and AICAR from PRFAR using the ammonia provided by the HisH subunit. In Prochlorococcus marinus (strain AS9601), this protein is Imidazole glycerol phosphate synthase subunit HisF.